We begin with the raw amino-acid sequence, 207 residues long: Pyridoxine/pyridoxamine 5'-phosphate oxidase (207 aa).

FMN-binding positions include 53 to 58 (RMVLLK), 68 to 69 (YT), lysine 75, and glutamine 97. Lysine 58 provides a ligand contact to substrate. Residues tyrosine 115, arginine 119, and serine 123 each contribute to the substrate site. FMN contacts are provided by residues 132-133 (QS) and tryptophan 177. 183–185 (RLH) provides a ligand contact to substrate. Arginine 187 contacts FMN.

Belongs to the pyridoxamine 5'-phosphate oxidase family. Homodimer. The cofactor is FMN.

The enzyme catalyses pyridoxamine 5'-phosphate + O2 + H2O = pyridoxal 5'-phosphate + H2O2 + NH4(+). The catalysed reaction is pyridoxine 5'-phosphate + O2 = pyridoxal 5'-phosphate + H2O2. Its pathway is cofactor metabolism; pyridoxal 5'-phosphate salvage; pyridoxal 5'-phosphate from pyridoxamine 5'-phosphate: step 1/1. The protein operates within cofactor metabolism; pyridoxal 5'-phosphate salvage; pyridoxal 5'-phosphate from pyridoxine 5'-phosphate: step 1/1. Catalyzes the oxidation of either pyridoxine 5'-phosphate (PNP) or pyridoxamine 5'-phosphate (PMP) into pyridoxal 5'-phosphate (PLP). This chain is Pyridoxine/pyridoxamine 5'-phosphate oxidase, found in Bartonella quintana (strain Toulouse) (Rochalimaea quintana).